A 143-amino-acid chain; its full sequence is Holo-[acyl-carrier-protein] synthase (143 aa).

Residues D9 and E63 each contribute to the Mg(2+) site.

It belongs to the P-Pant transferase superfamily. AcpS family. Mg(2+) serves as cofactor.

The protein localises to the cytoplasm. The catalysed reaction is apo-[ACP] + CoA = holo-[ACP] + adenosine 3',5'-bisphosphate + H(+). Transfers the 4'-phosphopantetheine moiety from coenzyme A to a Ser of acyl-carrier-protein. In Burkholderia pseudomallei (strain 1106a), this protein is Holo-[acyl-carrier-protein] synthase.